Consider the following 202-residue polypeptide: Lipoprotein signal peptidase (202 aa).

A disordered region spans residues 1–29 (MPDEPTGSADPLTSTEEAGGAGEPNAPAP). The next 3 membrane-spanning stretches (helical) occupy residues 35–55 (MLLSVAVVVLTLDIVTKVVAV), 88–108 (GYTWVLTLIATGVVVGIFWMG), and 112–132 (VSPWWALGLGMILGGAMGNLV). Residues Asp148 and Asp162 contribute to the active site. A helical membrane pass occupies residues 160–180 (VADPSVVGGAILLVILSIFGF).

It belongs to the peptidase A8 family.

It is found in the cell membrane. The enzyme catalyses Release of signal peptides from bacterial membrane prolipoproteins. Hydrolyzes -Xaa-Yaa-Zaa-|-(S,diacylglyceryl)Cys-, in which Xaa is hydrophobic (preferably Leu), and Yaa (Ala or Ser) and Zaa (Gly or Ala) have small, neutral side chains.. The protein operates within protein modification; lipoprotein biosynthesis (signal peptide cleavage). In terms of biological role, this protein specifically catalyzes the removal of signal peptides from prolipoproteins. The protein is Lipoprotein signal peptidase of Mycobacterium bovis (strain ATCC BAA-935 / AF2122/97).